The sequence spans 399 residues: 1-deoxy-D-xylulose 5-phosphate reductoisomerase (399 aa).

NADPH is bound by residues Thr11, Gly12, Ser13, Ile14, and Asn125. A 1-deoxy-D-xylulose 5-phosphate-binding site is contributed by Lys126. Glu127 is an NADPH binding site. Asp151 contacts Mn(2+). The 1-deoxy-D-xylulose 5-phosphate site is built by Ser152, Glu153, Ser186, and His209. Glu153 is a Mn(2+) binding site. Gly215 provides a ligand contact to NADPH. 1-deoxy-D-xylulose 5-phosphate contacts are provided by Ser222, Asn227, Lys228, and Glu231. Position 231 (Glu231) interacts with Mn(2+).

It belongs to the DXR family. Requires Mg(2+) as cofactor. Mn(2+) serves as cofactor.

It carries out the reaction 2-C-methyl-D-erythritol 4-phosphate + NADP(+) = 1-deoxy-D-xylulose 5-phosphate + NADPH + H(+). The protein operates within isoprenoid biosynthesis; isopentenyl diphosphate biosynthesis via DXP pathway; isopentenyl diphosphate from 1-deoxy-D-xylulose 5-phosphate: step 1/6. In terms of biological role, catalyzes the NADPH-dependent rearrangement and reduction of 1-deoxy-D-xylulose-5-phosphate (DXP) to 2-C-methyl-D-erythritol 4-phosphate (MEP). The polypeptide is 1-deoxy-D-xylulose 5-phosphate reductoisomerase (Acinetobacter baumannii (strain SDF)).